A 190-amino-acid polypeptide reads, in one-letter code: Myophilin (190 aa).

The interval 1-23 (MSNVPPPSGLSYQVKKKLEGKRD) is disordered. The 107-residue stretch at 24–130 (KDQENEALEW…RTLFALGRTC (107 aa)) folds into the Calponin-homology (CH) domain. The stretch at 165–189 (VSLQYGSNKGASQAGINMGKQRMIM) is one Calponin-like repeat.

It belongs to the calponin family. As to expression, muscle specific.

The protein is Myophilin of Echinococcus granulosus (Hydatid tapeworm).